We begin with the raw amino-acid sequence, 62 residues long: uncharacterized protein (62 aa).

The chain crosses the membrane as a helical span at residues 17-37 (IVFFLGLVVVLLMMINLYMLI).

The protein resides in the membrane. This is an uncharacterized protein from Helicobacter pylori (strain J99 / ATCC 700824) (Campylobacter pylori J99).